The sequence spans 1602 residues: MAP kinase-activating death domain protein (1602 aa).

In terms of domain architecture, uDENN spans 13–267 (YLVIVGARHP…VPVSGQKRVD (255 aa)). Residues 105–121 (PKEKAEGGAGPRGKEGA) are compositionally biased toward basic and acidic residues. Positions 105–167 (PKEKAEGGAG…GKRRAKAGNR (63 aa)) are disordered. Residues 126-137 (ASEEAATESSES) show a composition bias toward low complexity. A compositionally biased stretch (polar residues) spans 138–156 (GSTLQPPSADSTPDVNQSP). Ser155 bears the Phosphoserine mark. Positions 157-166 (RGKRRAKAGN) are enriched in basic residues. The cDENN domain maps to 288 to 428 (RFTLVDFPLH…ESLELKKHLK (141 aa)). The dDENN domain occupies 430–564 (ALASMSLNTQ…LNPSNYAFQR (135 aa)). Disordered regions lie at residues 603–635 (ALSV…SSYS) and 676–840 (QPQK…NSTE). Acidic residues predominate over residues 614–629 (SDPTDDSGSDSMDYDD). Phosphoserine occurs at positions 688 and 691. The segment covering 688–698 (SENSQENLPLR) has biased composition (polar residues). The span at 699–711 (SSSSTTASSSPST) shows a compositional bias: low complexity. Ser778 bears the Phosphoserine mark. Residues 789–803 (ESYTPRFSQHASGSR) show a composition bias toward polar residues. Phosphoserine occurs at positions 812, 817, and 819. Positions 826–839 (RASSPNSTVSNNST) are enriched in low complexity. Residues Ser857, Ser861, Ser895, Ser900, and Ser909 each carry the phosphoserine modification. 3 disordered regions span residues 870–920 (KGAR…SSEN), 1030–1089 (KEPD…DTRS), and 1113–1231 (TEEK…RSSE). The segment covering 911-920 (QGRSSNSSEN) has biased composition (polar residues). A Phosphoserine modification is found at Ser1038. Thr1040 and Thr1045 each carry phosphothreonine. Ser1089 is modified (phosphoserine). Residues 1119 to 1134 (QISADSGVSLASASQR) show a composition bias toward polar residues. The segment covering 1151–1162 (SSSQDSEVSNSS) has biased composition (low complexity). The segment covering 1191–1209 (SRATLSDSEIETNSATSTI) has biased composition (polar residues). The residue at position 1194 (Thr1194) is a Phosphothreonine. Ser1196 and Ser1225 each carry phosphoserine. The Death domain occupies 1295–1370 (GMDQGPQEMI…GLVYSQQINE (76 aa)).

It belongs to the MADD family. As to quaternary structure, interacts (via death domain) with TNFRSF1A (via death domain). Interacts with PIDD1. Interacts with YWHAZ. Interacts (via death domain) with KIF1B; links the motor KIF1B to Rab3-carrying vesicles in anterograde synaptic vesicle transport. Interacts with KIF1A. Interacts (via uDENN domain) with RAB3A, RAB3B, RAB3C and RAB3D; the GTP-bound form of the Rab proteins is preferred for interaction. As to expression, expressed in all tissues examined with the highest expression in brain.

The protein resides in the cell membrane. It localises to the cytoplasm. It is found in the cell projection. The protein localises to the axon. Guanyl-nucleotide exchange factor that regulates small GTPases of the Rab family. Converts GDP-bound inactive form of RAB27A and RAB27B to the GTP-bound active forms. Converts GDP-bound inactive form of RAB3A, RAB3C and RAB3D to the GTP-bound active forms, GTPases involved in synaptic vesicle exocytosis and vesicle secretion. Plays a role in synaptic vesicle formation and in vesicle trafficking at the neuromuscular junction. Involved in up-regulating a post-docking step of synaptic exocytosis in central synapses. Probably by binding to the motor proteins KIF1B and KIF1A, mediates motor-dependent transport of GTP-RAB3A-positive vesicles to the presynaptic nerve terminals. Plays a role in TNFA-mediated activation of the MAPK pathway, including ERK1/2. May link TNFRSF1A with MAP kinase activation. May be involved in the regulation of TNFA-induced apoptosis. This Rattus norvegicus (Rat) protein is MAP kinase-activating death domain protein.